A 117-amino-acid polypeptide reads, in one-letter code: Large ribosomal subunit protein uL18 (117 aa).

This sequence belongs to the universal ribosomal protein uL18 family. Part of the 50S ribosomal subunit; part of the 5S rRNA/L5/L18/L25 subcomplex. Contacts the 5S and 23S rRNAs.

This is one of the proteins that bind and probably mediate the attachment of the 5S RNA into the large ribosomal subunit, where it forms part of the central protuberance. This is Large ribosomal subunit protein uL18 from Mycoplasma mobile (strain ATCC 43663 / 163K / NCTC 11711) (Mesomycoplasma mobile).